We begin with the raw amino-acid sequence, 157 residues long: RNA pyrophosphohydrolase (157 aa).

One can recognise a Nudix hydrolase domain in the interval 6-149 (SYRPNVAAVI…KRKVYRRVID (144 aa)). Positions 43–64 (GGIDEGETPEDALYRELLEEIG) match the Nudix box motif.

This sequence belongs to the Nudix hydrolase family. RppH subfamily. A divalent metal cation serves as cofactor.

Accelerates the degradation of transcripts by removing pyrophosphate from the 5'-end of triphosphorylated RNA, leading to a more labile monophosphorylated state that can stimulate subsequent ribonuclease cleavage. The chain is RNA pyrophosphohydrolase from Sulfurovum sp. (strain NBC37-1).